A 492-amino-acid polypeptide reads, in one-letter code: Cytochrome P450 26A1 (492 aa).

Cys437 lines the heme pocket.

This sequence belongs to the cytochrome P450 family. Requires heme as cofactor.

Its subcellular location is the endoplasmic reticulum membrane. It is found in the microsome membrane. It carries out the reaction all-trans-retinoate + reduced [NADPH--hemoprotein reductase] + O2 = all-trans-(4S)-hydroxyretinoate + oxidized [NADPH--hemoprotein reductase] + H2O + H(+). The enzyme catalyses all-trans-(4S)-hydroxyretinoate + reduced [NADPH--hemoprotein reductase] + O2 = all-trans-(4S,16)-dihydroxyretinoate + oxidized [NADPH--hemoprotein reductase] + H2O + H(+). It catalyses the reaction all-trans-retinoate + reduced [NADPH--hemoprotein reductase] + O2 = all-trans-18-hydroxyretinoate + oxidized [NADPH--hemoprotein reductase] + H2O + H(+). A cytochrome P450 monooxygenase involved in the metabolism of retinoates (RAs), the active metabolites of vitamin A, and critical signaling molecules in animals. RAs exist as at least four different isomers: all-trans-RA (atRA), 9-cis-RA, 13-cis-RA, and 9,13-dicis-RA, where atRA is considered to be the biologically active isomer, although 9-cis-RA and 13-cis-RA also have activity. Catalyzes the hydroxylation of atRA primarily at C-4 and C-18, thereby contributing to the regulation of atRA homeostasis and signaling. Hydroxylation of atRA limits its biological activity and initiates a degradative process leading to its eventual elimination. Involved in the convertion of atRA to all-trans-4-oxo-RA. Able to metabolize other RAs such as 9-cis, 13-cis and 9,13-di-cis RA. Can oxidize all-trans-13,14-dihydroretinoate (DRA) to metabolites which could include all-trans-4-oxo-DRA, all-trans-4-hydroxy-DRA, all-trans-5,8-epoxy-DRA, and all-trans-18-hydroxy-DRA. May play a role in the oxidative metabolism of xenobiotics such as tazarotenic acid. The protein is Cytochrome P450 26A1 (CYP26A1) of Gallus gallus (Chicken).